The primary structure comprises 328 residues: Biotin synthase (328 aa).

A Radical SAM core domain is found at 50–277 (FGDQVHLCCI…GKEIVICGGR (228 aa)). Residues C67, C71, and C74 each contribute to the [4Fe-4S] cluster site. Residues S111, C142, and C202 each coordinate [2Fe-2S] cluster.

It belongs to the radical SAM superfamily. Biotin synthase family. As to quaternary structure, homodimer. Requires [4Fe-4S] cluster as cofactor. The cofactor is [2Fe-2S] cluster.

The enzyme catalyses (4R,5S)-dethiobiotin + (sulfur carrier)-SH + 2 reduced [2Fe-2S]-[ferredoxin] + 2 S-adenosyl-L-methionine = (sulfur carrier)-H + biotin + 2 5'-deoxyadenosine + 2 L-methionine + 2 oxidized [2Fe-2S]-[ferredoxin]. It participates in cofactor biosynthesis; biotin biosynthesis; biotin from 7,8-diaminononanoate: step 2/2. In terms of biological role, catalyzes the conversion of dethiobiotin (DTB) to biotin by the insertion of a sulfur atom into dethiobiotin via a radical-based mechanism. The chain is Biotin synthase from Desulfatibacillum aliphaticivorans.